The following is a 245-amino-acid chain: Exosome complex component RRP41 (245 aa).

Ala-2 carries the N-acetylalanine modification.

The protein belongs to the RNase PH family. In terms of assembly, component of the RNA exosome core complex (Exo-9), composed of EXOSC1, EXOSC2, EXOSC3, EXOSC4, EXOSC5, EXOSC6, EXOSC7, EXOSC8 and EXOSC9; within the complex interacts with EXOSC2, EXOSC7 and EXOSC9. The catalytically inactive RNA exosome core complex (Exo-9) associates with the catalytic subunit EXOSC10/RRP6. Exo-9 may associate with DIS3 to form the nucleolar exosome complex, or DIS3L to form the cytoplasmic exosome complex. Exo-9 is formed by a hexameric base ring consisting of the heterodimers EXOSC4-EXOSC9, EXOSC5-EXOSC8 and EXOSC6-EXOSC7, and a cap ring consisting of EXOSC1, EXOSC2 and EXOSC3. The RNA exosome complex associates with cofactors C1D/RRP47, MPHOSPH6/MPP6 and MTREX/MTR4. Interacts with DDX60. Interacts with DIS3; the interaction is direct.

The protein localises to the cytoplasm. The protein resides in the nucleus. Its subcellular location is the nucleolus. It localises to the nucleoplasm. Its function is as follows. Non-catalytic component of the RNA exosome complex which has 3'-&gt;5' exoribonuclease activity and participates in a multitude of cellular RNA processing and degradation events. In the nucleus, the RNA exosome complex is involved in proper maturation of stable RNA species such as rRNA, snRNA and snoRNA, in the elimination of RNA processing by-products and non-coding 'pervasive' transcripts, such as antisense RNA species and promoter-upstream transcripts (PROMPTs), and of mRNAs with processing defects, thereby limiting or excluding their export to the cytoplasm. The RNA exosome may be involved in Ig class switch recombination (CSR) and/or Ig variable region somatic hypermutation (SHM) by targeting AICDA deamination activity to transcribed dsDNA substrates. In the cytoplasm, the RNA exosome complex is involved in general mRNA turnover and specifically degrades inherently unstable mRNAs containing AU-rich elements (AREs) within their 3' untranslated regions, and in RNA surveillance pathways, preventing translation of aberrant mRNAs. It seems to be involved in degradation of histone mRNA. The catalytic inactive RNA exosome core complex of 9 subunits (Exo-9) is proposed to play a pivotal role in the binding and presentation of RNA for ribonucleolysis, and to serve as a scaffold for the association with catalytic subunits and accessory proteins or complexes. EXOSC4 binds to ARE-containing RNAs. The polypeptide is Exosome complex component RRP41 (Exosc4) (Mus musculus (Mouse)).